Here is a 93-residue protein sequence, read N- to C-terminus: Pyrimidine/purine nucleoside phosphorylase (93 aa).

This sequence belongs to the nucleoside phosphorylase PpnP family.

The catalysed reaction is a purine D-ribonucleoside + phosphate = a purine nucleobase + alpha-D-ribose 1-phosphate. It catalyses the reaction adenosine + phosphate = alpha-D-ribose 1-phosphate + adenine. The enzyme catalyses cytidine + phosphate = cytosine + alpha-D-ribose 1-phosphate. It carries out the reaction guanosine + phosphate = alpha-D-ribose 1-phosphate + guanine. The catalysed reaction is inosine + phosphate = alpha-D-ribose 1-phosphate + hypoxanthine. It catalyses the reaction thymidine + phosphate = 2-deoxy-alpha-D-ribose 1-phosphate + thymine. The enzyme catalyses uridine + phosphate = alpha-D-ribose 1-phosphate + uracil. It carries out the reaction xanthosine + phosphate = alpha-D-ribose 1-phosphate + xanthine. Functionally, catalyzes the phosphorolysis of diverse nucleosides, yielding D-ribose 1-phosphate and the respective free bases. Can use uridine, adenosine, guanosine, cytidine, thymidine, inosine and xanthosine as substrates. Also catalyzes the reverse reactions. The polypeptide is Pyrimidine/purine nucleoside phosphorylase (Aliivibrio fischeri (strain ATCC 700601 / ES114) (Vibrio fischeri)).